Here is a 462-residue protein sequence, read N- to C-terminus: tRNA-2-methylthio-N(6)-dimethylallyladenosine synthase (462 aa).

In terms of domain architecture, MTTase N-terminal spans 2–117 (KRYFIHTFGC…LPDIIGRVSA (116 aa)). Residues Cys11, Cys47, Cys80, Cys157, Cys161, and Cys164 each coordinate [4Fe-4S] cluster. Residues 143-372 (SRGKVTEFVT…QKLQRRISGE (230 aa)) form the Radical SAM core domain. In terms of domain architecture, TRAM spans 375 to 437 (AALVGSEVEV…PNQLAGKQVA (63 aa)).

Belongs to the methylthiotransferase family. MiaB subfamily. As to quaternary structure, monomer. [4Fe-4S] cluster serves as cofactor.

It localises to the cytoplasm. The catalysed reaction is N(6)-dimethylallyladenosine(37) in tRNA + (sulfur carrier)-SH + AH2 + 2 S-adenosyl-L-methionine = 2-methylsulfanyl-N(6)-dimethylallyladenosine(37) in tRNA + (sulfur carrier)-H + 5'-deoxyadenosine + L-methionine + A + S-adenosyl-L-homocysteine + 2 H(+). Catalyzes the methylthiolation of N6-(dimethylallyl)adenosine (i(6)A), leading to the formation of 2-methylthio-N6-(dimethylallyl)adenosine (ms(2)i(6)A) at position 37 in tRNAs that read codons beginning with uridine. In Myxococcus xanthus (strain DK1622), this protein is tRNA-2-methylthio-N(6)-dimethylallyladenosine synthase.